Reading from the N-terminus, the 71-residue chain is Small ribosomal subunit protein bS18 (71 aa).

It belongs to the bacterial ribosomal protein bS18 family. Part of the 30S ribosomal subunit. Forms a tight heterodimer with protein bS6.

Binds as a heterodimer with protein bS6 to the central domain of the 16S rRNA, where it helps stabilize the platform of the 30S subunit. In Synechococcus elongatus (strain ATCC 33912 / PCC 7942 / FACHB-805) (Anacystis nidulans R2), this protein is Small ribosomal subunit protein bS18.